The chain runs to 301 residues: Radial spoke head 1 homolog (301 aa).

A compositionally biased stretch (acidic residues) spans 1 to 20; the sequence is MSDLGSEELEEEGENDLGEY. The interval 1–41 is disordered; that stretch reads MSDLGSEELEEEGENDLGEYEGERNEVGERHGHGKARLPNG. 6 MORN repeats span residues 20 to 43, 44 to 66, 67 to 89, 90 to 112, 113 to 135, and 159 to 181; these read YEGERNEVGERHGHGKARLPNGDT, YEGSYEFGKRHGQGTYKFKNGAR, YTGDYVKNKKHGQGTFIYPDGSR, YEGEWADDQRHGQGVYYYVNNDT, YTGEWFNHQRHGQGTYLYAETGS, and YQGKFMNKNPVGPGKYVFDIGCE. Positions 21-31 are enriched in basic and acidic residues; the sequence is EGERNEVGERH. Residues 225–301 form a disordered region; it reads LSEEQPPPEG…FDEEPSDLQD (77 aa). The span at 249–261 shows a compositional bias: acidic residues; the sequence is PSEDIQAEGFEGE. Basic and acidic residues predominate over residues 262-278; that stretch reads LEPRGADEDVDTFRQES. Residues 279–290 show a composition bias toward polar residues; the sequence is QENSYDIDQGNL. A compositionally biased stretch (acidic residues) spans 292 to 301; it reads FDEEPSDLQD.

In terms of assembly, component of the axonemal radial spoke 1 (RS1) and 2 (RS2) complexes, at least composed of spoke head proteins RSPH1, RSPH3, RSPH9 and the cilia-specific component RSPH4A or sperm-specific component RSPH6A, spoke stalk proteins RSPH14, DNAJB13, DYDC1, ROPN1L and NME5, and the RS1 complex-specific anchor protein IQUB. Interacts with RSPH3B. Interacts with RSPH4A. Interacts with RSPH6A. Expressed in the trachea, ependymal cells, oviduct and ependymal cells (at protein level). Germ cell specific. Specifically expressed in testis, and to a lower extent in ovary. Not expressed in somatic tissues.

The protein localises to the cytoplasm. Its subcellular location is the chromosome. It is found in the cytoskeleton. The protein resides in the cilium axoneme. It localises to the flagellum axoneme. In terms of biological role, functions as part of axonemal radial spoke complexes that play an important part in the motility of sperm and cilia. This Mus musculus (Mouse) protein is Radial spoke head 1 homolog (Rsph1).